We begin with the raw amino-acid sequence, 106 residues long: Serine rich endogenous peptide 7 (106 aa).

An N-terminal signal peptide occupies residues 1–26; sequence MGKKCSSKFRQMLVLVLLLIVFTCLS. Basic and acidic residues-rich tracts occupy residues 46-56 and 65-77; these read GIEDEGQERTH and RSVE…EGRR. A disordered region spans residues 46 to 106; the sequence is GIEDEGQERT…GGGRIPVAAS (61 aa). 2 consecutive short sequence motifs (SCOOP motif) follow at residues 58-72 and 86-100; these read LNSK…KTHH and GIRA…GGGR. 2 consecutive short sequence motifs (sxS motif essential for MIK2 binding) follow at residues 64–66 and 92–94; these read SRS and SKS.

The protein belongs to the serine rich endogenous peptide (SCOOP) phytocytokine family. Interacts with MIK2 (via extracellular leucine-rich repeat domain); this interaction triggers the formation of complex between MIK2 and the BAK1/SERK3 and SERK4 coreceptors, and subsequent BAK1 activation by phosphorylation. Mostly expressed in roots, and, to a lower extent, in seedlings shoots.

It localises to the cell membrane. Its subcellular location is the secreted. The protein localises to the extracellular space. The protein resides in the apoplast. In terms of biological role, brassicaceae-specific phytocytokine (plant endogenous peptide released into the apoplast) perceived by MIK2 in a BAK1/SERK3 and SERK4 coreceptors-dependent manner, that modulates various physiological and antimicrobial processes including growth prevention and reactive oxygen species (ROS) response regulation. This is Serine rich endogenous peptide 7 from Arabidopsis thaliana (Mouse-ear cress).